The following is a 419-amino-acid chain: L-rhamnose isomerase (419 aa).

Mn(2+) contacts are provided by H262, D294, and D296.

It belongs to the rhamnose isomerase family. Homotetramer. It depends on Mn(2+) as a cofactor.

The protein resides in the cytoplasm. The enzyme catalyses L-rhamnopyranose = L-rhamnulose. The protein operates within carbohydrate degradation; L-rhamnose degradation; glycerone phosphate from L-rhamnose: step 1/3. Functionally, catalyzes the interconversion of L-rhamnose and L-rhamnulose. This chain is L-rhamnose isomerase, found in Klebsiella pneumoniae (strain 342).